The following is a 514-amino-acid chain: Cytochrome P450 monooxygenase aneD (514 aa).

The helical transmembrane segment at 6 to 26 (ICTLLAVIATTSLGLLFLSII) threads the bilayer. 3 N-linked (GlcNAc...) asparagine glycosylation sites follow: Asn113, Asn261, and Asn347. Position 424 (Cys424) interacts with heme.

Belongs to the cytochrome P450 family. Heme serves as cofactor.

It is found in the membrane. It carries out the reaction asperaculane D + reduced [NADPH--hemoprotein reductase] + O2 = asperaculane E + oxidized [NADPH--hemoprotein reductase] + H2O + H(+). Its pathway is secondary metabolite biosynthesis. Cytochrome P450 monooxygenase; part of the gene cluster that mediates the biosynthesis of aculenes, a unique type of norsesquiterpenes that contain a nordaucane skeleton linked to an L-proline moiety and are of mixed biosynthetic origin. The pathway begins with the synthesis of dauca-4,7-diene by the terpene cyclase aneC using farnesyl pyrophosphate (FPP) as substrate. The cytochrome P450 monooxygenase aneF then performs the initial oxidation at C-12 of dauca-4,7-diene to yield asperaculane D. Asperaculane D is substrate of the cytochrome P450 monooxygenase aneD for C-10 hydroxylation to yield asperaculane E. The cytochrome P450 monooxygenase aneG then converts asperaculane E into aculene D via C-2 oxidation. The monomodular nonribosomal peptide synthtase aneB adenylates L-proline and the thiohydrolase aneE transfers this activated L-proline derivative to aculenes D and C to produce respectively aculenes B and A. The dioxygenase aneA converts aculene D into aculene C, and aculene B into aculene A by introducing the 5,6-alkene moiety. Asperculanes A, B, C and F, as well as 14-prolyl asperculane C, might be shunt products of the pathway. This is Cytochrome P450 monooxygenase aneD from Aspergillus aculeatus (strain ATCC 16872 / CBS 172.66 / WB 5094).